A 444-amino-acid chain; its full sequence is Putative methylesterase 15, chloroplastic (444 aa).

Residues 1-27 are compositionally biased toward polar residues; sequence MGNSLRCISQEQDPNQKKPSSVVNGNS. 2 disordered regions span residues 1–36 and 48–91; these read MGNSLRCISQEQDPNQKKPSSVVNGNSSEKHVRRLS and PSLS…DSLI. The N-terminal 58 residues, 1–58, are a transit peptide targeting the chloroplast; the sequence is MGNSLRCISQEQDPNQKKPSSVVNGNSSEKHVRRLSLIPSFRRRTLLPSLSCSGSSTS. Positions 53 to 63 are enriched in low complexity; that stretch reads SGSSTSSTSKK. A compositionally biased stretch (basic residues) spans 64 to 80; sequence GGIKTKKKIRERHHQEQ. Positions 81–90 are enriched in basic and acidic residues; sequence HHHDHEKDSL. Residues 188-312 enclose the AB hydrolase-1 domain; sequence FVLVHGGGFG…QPDSNYDLME (125 aa). The active-site Acyl-ester intermediate is Asp-262. Residues Asp-390 and His-418 each act as charge relay system in the active site.

It belongs to the AB hydrolase superfamily. Methylesterase family.

It is found in the plastid. It localises to the chloroplast. In terms of biological role, putative methylesterase. This chain is Putative methylesterase 15, chloroplastic, found in Arabidopsis thaliana (Mouse-ear cress).